A 659-amino-acid chain; its full sequence is Oligopeptide-binding protein AmiA (659 aa).

An N-terminal signal peptide occupies residues 1-22 (MKKNRVFATAGLVLLAAGVLAA). A lipid anchor (N-palmitoyl cysteine) is attached at Cys-23. Cys-23 carries the S-diacylglycerol cysteine lipid modification.

The protein belongs to the bacterial solute-binding protein 5 family.

It localises to the cell membrane. Its function is as follows. Part of the binding-protein-dependent transport system for oligopeptides; probably an oligopeptide binding protein. In Streptococcus pneumoniae serotype 4 (strain ATCC BAA-334 / TIGR4), this protein is Oligopeptide-binding protein AmiA (amiA).